The chain runs to 417 residues: uncharacterized protein (417 aa).

This sequence belongs to the MG032/MG096/MG288 family.

This is an uncharacterized protein from Mycoplasma pneumoniae (strain ATCC 29342 / M129 / Subtype 1) (Mycoplasmoides pneumoniae).